We begin with the raw amino-acid sequence, 132 residues long: Small ribosomal subunit protein uS8 (132 aa).

It belongs to the universal ribosomal protein uS8 family. In terms of assembly, part of the 30S ribosomal subunit. Contacts proteins S5 and S12.

Its function is as follows. One of the primary rRNA binding proteins, it binds directly to 16S rRNA central domain where it helps coordinate assembly of the platform of the 30S subunit. The chain is Small ribosomal subunit protein uS8 from Thermoanaerobacter pseudethanolicus (strain ATCC 33223 / 39E) (Clostridium thermohydrosulfuricum).